The primary structure comprises 250 residues: Carboxymethylproline synthase (250 aa).

60–64 is a binding site for malonyl-CoA; the sequence is AGGDF.

It belongs to the enoyl-CoA hydratase/isomerase family. In terms of assembly, homotrimer.

It carries out the reaction (S)-1-pyrroline-5-carboxylate + malonyl-CoA + H2O + H(+) = (2S,5S)-5-carboxymethylproline + CO2 + CoA. Its pathway is antibiotic biosynthesis; carbapenem biosynthesis. Catalyzes the formation of (2S,5S)-carboxymethylproline (t-CMP) from malonyl-CoA and (S)-1-pyrroline-5-carboxylate, the first step in the biosynthesis of (5R)-carbapen-2-em-3-carboxylate, a beta-lactam antibiotic of the carbapenem class. Also catalyzes the independent decarboxylation of malonyl-CoA and methylmalonyl-CoA and the hydrolysis of CoA esters such as acetyl-CoA and propionyl-CoA. Catalyzes the reaction with a C2 epimeric mixture of methylmalonyl-CoA to give a 55:45 mixture of (6R)- and (6S)-epimers of 6-methyl-t-CMP, under standard incubation conditions. The chain is Carboxymethylproline synthase from Pectobacterium carotovorum subsp. carotovorum (Erwinia carotovora subsp. carotovora).